The chain runs to 331 residues: Serpentine receptor class alpha-1 (331 aa).

Transmembrane regions (helical) follow at residues 22-42, 57-77, 104-124, 143-163, 189-209, 238-258, and 274-294; these read FAVF…VIAV, IILV…AIIS, YTEV…GILI, VGII…QIII, FLFI…AVMF, ICVV…GVLI, and LITW…ILIF.

It belongs to the nematode receptor-like protein sra family.

Its subcellular location is the membrane. This is Serpentine receptor class alpha-1 (sra-1) from Caenorhabditis elegans.